We begin with the raw amino-acid sequence, 382 residues long: Bifunctional enzyme IspD/IspF (382 aa).

The segment at 1–225 (MTGKPSIAAL…AEERMAMISR (225 aa)) is 2-C-methyl-D-erythritol 4-phosphate cytidylyltransferase. The tract at residues 225–382 (RTAMGFDVHG…AVATVRVPSI (158 aa)) is 2-C-methyl-D-erythritol 2,4-cyclodiphosphate synthase. A divalent metal cation-binding residues include aspartate 231 and histidine 233. 4-CDP-2-C-methyl-D-erythritol 2-phosphate is bound by residues 231–233 (DVH) and 257–258 (HS). An a divalent metal cation-binding site is contributed by histidine 265. Residues 279-281 (DIG), 355-358 (TTTE), phenylalanine 362, and arginine 365 each bind 4-CDP-2-C-methyl-D-erythritol 2-phosphate.

This sequence in the N-terminal section; belongs to the IspD/TarI cytidylyltransferase family. IspD subfamily. The protein in the C-terminal section; belongs to the IspF family. The cofactor is a divalent metal cation.

It catalyses the reaction 2-C-methyl-D-erythritol 4-phosphate + CTP + H(+) = 4-CDP-2-C-methyl-D-erythritol + diphosphate. The enzyme catalyses 4-CDP-2-C-methyl-D-erythritol 2-phosphate = 2-C-methyl-D-erythritol 2,4-cyclic diphosphate + CMP. It participates in isoprenoid biosynthesis; isopentenyl diphosphate biosynthesis via DXP pathway; isopentenyl diphosphate from 1-deoxy-D-xylulose 5-phosphate: step 2/6. Its pathway is isoprenoid biosynthesis; isopentenyl diphosphate biosynthesis via DXP pathway; isopentenyl diphosphate from 1-deoxy-D-xylulose 5-phosphate: step 4/6. Functionally, bifunctional enzyme that catalyzes the formation of 4-diphosphocytidyl-2-C-methyl-D-erythritol from CTP and 2-C-methyl-D-erythritol 4-phosphate (MEP) (IspD), and catalyzes the conversion of 4-diphosphocytidyl-2-C-methyl-D-erythritol 2-phosphate (CDP-ME2P) to 2-C-methyl-D-erythritol 2,4-cyclodiphosphate (ME-CPP) with a corresponding release of cytidine 5-monophosphate (CMP) (IspF). This chain is Bifunctional enzyme IspD/IspF, found in Rhizorhabdus wittichii (strain DSM 6014 / CCUG 31198 / JCM 15750 / NBRC 105917 / EY 4224 / RW1) (Sphingomonas wittichii).